An 84-amino-acid polypeptide reads, in one-letter code: Envelope small membrane protein (84 aa).

At 1–18 (MFMADAYLADTVWYVGQI) the chain is on the virion surface side. A helical membrane pass occupies residues 19–39 (IFIVAICLLVIIVVVAFLATF). Residues 40 to 80 (KLCIQLCGMCNTLVLSPSIYVFNRGRQFYEFYNDVKPPVLD) are Intravirion-facing.

It belongs to the betacoronaviruses E protein family. As to quaternary structure, homopentamer. Interacts with membrane protein M in the budding compartment of the host cell, which is located between endoplasmic reticulum and the Golgi complex. Interacts with Nucleoprotein.

The protein resides in the host Golgi apparatus membrane. In terms of biological role, plays a central role in virus morphogenesis and assembly. Acts as a viroporin and self-assembles in host membranes forming pentameric protein-lipid pores that allow ion transport. Also plays a role in the induction of apoptosis. This is Envelope small membrane protein from Porcine hemagglutinating encephalomyelitis virus (strain 67N) (HEV-67N).